The chain runs to 134 residues: Large ribosomal subunit protein bL20 (134 aa).

The protein belongs to the bacterial ribosomal protein bL20 family.

Binds directly to 23S ribosomal RNA and is necessary for the in vitro assembly process of the 50S ribosomal subunit. It is not involved in the protein synthesizing functions of that subunit. The chain is Large ribosomal subunit protein bL20 from Rhizobium meliloti (strain 1021) (Ensifer meliloti).